Reading from the N-terminus, the 429-residue chain is Enolase (429 aa).

Residue glutamine 163 participates in (2R)-2-phosphoglycerate binding. Glutamate 205 acts as the Proton donor in catalysis. Mg(2+)-binding residues include aspartate 242, glutamate 286, and aspartate 313. Lysine 338, arginine 367, serine 368, and lysine 389 together coordinate (2R)-2-phosphoglycerate. Lysine 338 acts as the Proton acceptor in catalysis.

It belongs to the enolase family. Mg(2+) is required as a cofactor.

It localises to the cytoplasm. Its subcellular location is the secreted. It is found in the cell surface. It carries out the reaction (2R)-2-phosphoglycerate = phosphoenolpyruvate + H2O. The protein operates within carbohydrate degradation; glycolysis; pyruvate from D-glyceraldehyde 3-phosphate: step 4/5. Functionally, catalyzes the reversible conversion of 2-phosphoglycerate (2-PG) into phosphoenolpyruvate (PEP). It is essential for the degradation of carbohydrates via glycolysis. The polypeptide is Enolase (Citrifermentans bemidjiense (strain ATCC BAA-1014 / DSM 16622 / JCM 12645 / Bem) (Geobacter bemidjiensis)).